A 436-amino-acid chain; its full sequence is Serine--tRNA ligase (436 aa).

239 to 241 is an L-serine binding site; it reads TAE. 270–272 contacts ATP; the sequence is RKE. An L-serine-binding site is contributed by Glu293. 357-360 serves as a coordination point for ATP; it reads EISS. L-serine is bound at residue Ser392.

The protein belongs to the class-II aminoacyl-tRNA synthetase family. Type-1 seryl-tRNA synthetase subfamily. Homodimer. The tRNA molecule binds across the dimer.

Its subcellular location is the cytoplasm. The catalysed reaction is tRNA(Ser) + L-serine + ATP = L-seryl-tRNA(Ser) + AMP + diphosphate + H(+). The enzyme catalyses tRNA(Sec) + L-serine + ATP = L-seryl-tRNA(Sec) + AMP + diphosphate + H(+). Its pathway is aminoacyl-tRNA biosynthesis; selenocysteinyl-tRNA(Sec) biosynthesis; L-seryl-tRNA(Sec) from L-serine and tRNA(Sec): step 1/1. Catalyzes the attachment of serine to tRNA(Ser). Is also able to aminoacylate tRNA(Sec) with serine, to form the misacylated tRNA L-seryl-tRNA(Sec), which will be further converted into selenocysteinyl-tRNA(Sec). The polypeptide is Serine--tRNA ligase (Leuconostoc citreum (strain KM20)).